The following is a 476-amino-acid chain: ATP synthase subunit beta (476 aa).

154 to 161 (GGAGVGKT) provides a ligand contact to ATP.

The protein belongs to the ATPase alpha/beta chains family. F-type ATPases have 2 components, CF(1) - the catalytic core - and CF(0) - the membrane proton channel. CF(1) has five subunits: alpha(3), beta(3), gamma(1), delta(1), epsilon(1). CF(0) has four main subunits: a(1), b(1), b'(1) and c(9-12).

It is found in the cell inner membrane. It catalyses the reaction ATP + H2O + 4 H(+)(in) = ADP + phosphate + 5 H(+)(out). Its function is as follows. Produces ATP from ADP in the presence of a proton gradient across the membrane. The catalytic sites are hosted primarily by the beta subunits. The chain is ATP synthase subunit beta from Rhodopseudomonas palustris (strain BisB5).